Reading from the N-terminus, the 77-residue chain is Major outer membrane lipoprotein Lpp (77 aa).

An N-terminal signal peptide occupies residues 1-19 (MNRTKLVLGAVILGSHSAG). Cysteine 20 is lipidated: N-palmitoyl cysteine. A lipid anchor (S-diacylglycerol cysteine) is attached at cysteine 20. Repeats lie at residues 23-33 (NAKIDQLSSDV) and 37-47 (NAKVDQLSNDV). Residues 26-74 (IDQLSSDVQTLNAKVDQLSNDVNAMRSDVQAAKDDAARANQRLDNQAHA) are a coiled coil. Residues 56-77 (AAKDDAARANQRLDNQAHAYKK) are disordered. Lysine 77 bears the N6-murein peptidoglycan lysine mark.

It belongs to the Lpp family. As to quaternary structure, homotrimer.

Its subcellular location is the cell outer membrane. The protein localises to the secreted. The protein resides in the cell wall. In terms of biological role, a highly abundant outer membrane lipoprotein that controls the distance between the inner and outer membranes. The only protein known to be covalently linked to the peptidoglycan network (PGN). Also non-covalently binds the PGN. The link between the cell outer membrane and PGN contributes to maintenance of the structural and functional integrity of the cell envelope, and maintains the correct distance between the PGN and the outer membrane. In Serratia marcescens, this protein is Major outer membrane lipoprotein Lpp.